The following is a 531-amino-acid chain: UDP-glucuronosyltransferase 1A7 (531 aa).

The signal sequence occupies residues 1–25 (MAPADFPASLPLCVCLLLASGLAQA). N-linked (GlcNAc...) asparagine glycans are attached at residues Asn293 and Asn431. The helical transmembrane segment at 489–509 (VIGFLLAIVLTVVFIVFKCCA) threads the bilayer.

The protein belongs to the UDP-glycosyltransferase family. In terms of assembly, homodimer. Homooligomer. Interacts with UGT1A1, UGT1A3, UGT1A4, UGT1A6, UGT1A8, UGT1A9 and UGT1A10 to form heterodimers. As to expression, widely expressed with highest levels detected in colon and kidney.

The protein resides in the endoplasmic reticulum membrane. The enzyme catalyses glucuronate acceptor + UDP-alpha-D-glucuronate = acceptor beta-D-glucuronoside + UDP + H(+). It carries out the reaction 17alpha-estradiol + UDP-alpha-D-glucuronate = 17alpha-estradiol 3-O-(beta-D-glucuronate) + UDP + H(+). The catalysed reaction is prunetin + UDP-alpha-D-glucuronate = prunetin-5-O-beta-D-glucuronide + UDP. It catalyses the reaction 5-epi-5-F2t-IsoP + UDP-alpha-D-glucuronate = 5-epi-5-F2t-IsoP-glucuronide + UDP + H(+). The enzyme catalyses (E)-ferulate + UDP-alpha-D-glucuronate = (E)-ferulic acid beta-D-glucuronate ester + UDP. It carries out the reaction candesartan + UDP-alpha-D-glucuronate = candesartan O-beta-D-glucuronoside + UDP. The catalysed reaction is SN-38 + UDP-alpha-D-glucuronate = SN-38 O-beta-D-glucuronide + UDP + H(+). It catalyses the reaction mycophenolate + UDP-alpha-D-glucuronate = mycophenolate 7-O-beta-D-glucuronide + UDP + H(+). Its function is as follows. UDP-glucuronosyltransferase (UGT) that catalyzes phase II biotransformation reactions in which lipophilic substrates are conjugated with glucuronic acid to increase the metabolite's water solubility, thereby facilitating excretion into either the urine or bile. Essential for the elimination and detoxification of drugs, xenobiotics and endogenous compounds. Catalyzes the glucuronidation of endogenous estrogen hormone epiestradiol. Involved in the glucuronidation of F2-isoprostane (5-epi-5-F2t-IsoP). Involved in the glucuronidation of the phytochemical ferulic acid at the carboxylic acid group. Also catalyzes the glucuronidation of the isoflavones genistein, daidzein, glycitein, formononetin, biochanin A and prunetin, which are phytoestrogens with anticancer and cardiovascular properties. Involved in the glucuronidation of the AGTR1 angiotensin receptor antagonist caderastan, a drug which can inhibit the effect of angiotensin II. Involved in the biotransformation of 7-ethyl-10-hydroxycamptothecin (SN-38), the pharmacologically active metabolite of the anticancer drug irinotecan. Also metabolizes mycophenolate, an immunosuppressive agent. This chain is UDP-glucuronosyltransferase 1A7, found in Mus musculus (Mouse).